We begin with the raw amino-acid sequence, 124 residues long: Ribonuclease P protein component (124 aa).

The protein belongs to the RnpA family. In terms of assembly, consists of a catalytic RNA component (M1 or rnpB) and a protein subunit.

It carries out the reaction Endonucleolytic cleavage of RNA, removing 5'-extranucleotides from tRNA precursor.. RNaseP catalyzes the removal of the 5'-leader sequence from pre-tRNA to produce the mature 5'-terminus. It can also cleave other RNA substrates such as 4.5S RNA. The protein component plays an auxiliary but essential role in vivo by binding to the 5'-leader sequence and broadening the substrate specificity of the ribozyme. This Maridesulfovibrio salexigens (strain ATCC 14822 / DSM 2638 / NCIMB 8403 / VKM B-1763) (Desulfovibrio salexigens) protein is Ribonuclease P protein component.